The following is a 507-amino-acid chain: Maturase K (507 aa).

The protein belongs to the intron maturase 2 family. MatK subfamily.

Its subcellular location is the plastid. It is found in the chloroplast. Its function is as follows. Usually encoded in the trnK tRNA gene intron. Probably assists in splicing its own and other chloroplast group II introns. The protein is Maturase K of Calocedrus decurrens (California incense-cedar).